A 113-amino-acid chain; its full sequence is Cell cycle control protein 50C (113 aa).

Over 1–34 (MEERAQHCLSRLLDNSALKQQELPIHRLYFTARR) the chain is Cytoplasmic. Residues 35–55 (VLFVFFATGIFCLCMGIILIL) form a helical membrane-spanning segment. Residues 56-113 (SARSTQEIEINYTRICANCAKLRENASNFDKECTCSIPFYLSGKMMVGEIQETRLTLH) lie on the Extracellular side of the membrane. Asn-66 carries N-linked (GlcNAc...) asparagine glycosylation.

The protein belongs to the CDC50/LEM3 family. In terms of tissue distribution, specifically expressed in testis.

It is found in the membrane. This chain is Cell cycle control protein 50C, found in Homo sapiens (Human).